Reading from the N-terminus, the 186-residue chain is Large ribosomal subunit protein uL5 (186 aa).

The protein belongs to the universal ribosomal protein uL5 family. As to quaternary structure, part of the 50S ribosomal subunit; part of the 5S rRNA/L5/L18/L25 subcomplex. Contacts the 5S rRNA and the P site tRNA. Forms a bridge to the 30S subunit in the 70S ribosome.

Functionally, this is one of the proteins that bind and probably mediate the attachment of the 5S RNA into the large ribosomal subunit, where it forms part of the central protuberance. In the 70S ribosome it contacts protein S13 of the 30S subunit (bridge B1b), connecting the 2 subunits; this bridge is implicated in subunit movement. Contacts the P site tRNA; the 5S rRNA and some of its associated proteins might help stabilize positioning of ribosome-bound tRNAs. In Maricaulis maris (strain MCS10) (Caulobacter maris), this protein is Large ribosomal subunit protein uL5.